The primary structure comprises 363 residues: Cytoskeleton protein RodZ (363 aa).

The Cytoplasmic segment spans residues 1 to 111; sequence MNTEASQDQT…LGKKHKKRDG (111 aa). Positions 19-79 constitute an HTH cro/C1-type domain; it reads LRQARESLGL…KLVHLPEDEL (61 aa). The segment at residues 30 to 49 is a DNA-binding region (H-T-H motif); sequence QQTVAERLCLKVSTIRDIEE. Residues 112 to 132 traverse the membrane as a helical; Signal-anchor for type II membrane protein segment; that stretch reads WLMSFTWLIVLVVLGLTGAWW. The Periplasmic segment spans residues 133 to 363; the sequence is WQNHQAQQAE…RVARLTVGVE (231 aa). Residues 151-277 are disordered; it reads SAQLSQNGGQ…PLPTADAGVS (127 aa). Positions 188–199 are enriched in polar residues; the sequence is PLTNHSVSAITN. Low complexity predominate over residues 200 to 225; that stretch reads SAPTTSSVPTTSSATTSSVPTTSSVP. Over residues 226–243 the composition is skewed to polar residues; the sequence is KINSTEPVDTANTNTTMH. Low complexity predominate over residues 247–259; it reads AASAAVSPSQVPQ.

Belongs to the RodZ family.

Its subcellular location is the cell inner membrane. In terms of biological role, cytoskeletal protein that is involved in cell-shape control through regulation of the length of the long axis. The chain is Cytoskeleton protein RodZ from Yersinia pseudotuberculosis serotype O:1b (strain IP 31758).